Here is a 613-residue protein sequence, read N- to C-terminus: Chitin synthase 8 (613 aa).

Residues Met-1–Pro-73 are disordered. A glycan (N-linked (GlcNAc...) asparagine) is linked at Asn-17. Positions Leu-18–Thr-27 are enriched in polar residues. Pro residues predominate over residues Glu-61–Pro-73. Transmembrane regions (helical) follow at residues Tyr-119–Tyr-139 and Tyr-142–Ile-162. 3 N-linked (GlcNAc...) asparagine glycosylation sites follow: Asn-312, Asn-421, and Asn-471. The next 2 helical transmembrane spans lie at Val-556 to Leu-576 and Ile-583 to Ala-602.

The protein belongs to the chitin synthase family.

It localises to the cell membrane. It catalyses the reaction [(1-&gt;4)-N-acetyl-beta-D-glucosaminyl](n) + UDP-N-acetyl-alpha-D-glucosamine = [(1-&gt;4)-N-acetyl-beta-D-glucosaminyl](n+1) + UDP + H(+). Polymerizes chitin, a structural polymer of the cell wall and septum, by transferring the sugar moiety of UDP-GlcNAc to the non-reducing end of the growing chitin polymer. Plays a role in cell wall integrity. Plays a key role in pathogenicity. Likely contributes to post-penetration virulence. The sequence is that of Chitin synthase 8 from Verticillium dahliae (strain VdLs.17 / ATCC MYA-4575 / FGSC 10137) (Verticillium wilt).